A 104-amino-acid chain; its full sequence is L-rhamnose mutarotase (104 aa).

Position 18 (Y18) interacts with substrate. Residue H22 is the Proton donor of the active site. Substrate is bound by residues Y41 and 76-77; that span reads WW.

It belongs to the rhamnose mutarotase family. Homodimer.

Its subcellular location is the cytoplasm. It carries out the reaction alpha-L-rhamnose = beta-L-rhamnose. Its pathway is carbohydrate metabolism; L-rhamnose metabolism. Functionally, involved in the anomeric conversion of L-rhamnose. This chain is L-rhamnose mutarotase, found in Listeria monocytogenes serovar 1/2a (strain ATCC BAA-679 / EGD-e).